The primary structure comprises 268 residues: Tryptophan synthase alpha chain (268 aa).

Active-site proton acceptor residues include E49 and D60.

The protein belongs to the TrpA family. Tetramer of two alpha and two beta chains.

It catalyses the reaction (1S,2R)-1-C-(indol-3-yl)glycerol 3-phosphate + L-serine = D-glyceraldehyde 3-phosphate + L-tryptophan + H2O. It participates in amino-acid biosynthesis; L-tryptophan biosynthesis; L-tryptophan from chorismate: step 5/5. In terms of biological role, the alpha subunit is responsible for the aldol cleavage of indoleglycerol phosphate to indole and glyceraldehyde 3-phosphate. This is Tryptophan synthase alpha chain from Haemophilus influenzae (strain PittGG).